A 247-amino-acid chain; its full sequence is Cytochrome c oxidase subunit 2 (247 aa).

An N-terminal signal peptide occupies residues 1–11 (MLLIINNIINN). Residues 12-38 (DVPTPWGVYFQDSATPNHEGIIELHDN) are Mitochondrial intermembrane-facing. Residues 39 to 59 (IMFYLVLILCLVSWLLFSIVK) form a helical membrane-spanning segment. Residues 60 to 78 (DGSKNPLPHKYLVHGQTIE) are Mitochondrial matrix-facing. The helical transmembrane segment at 79–101 (IIWTILPALVLLVIAFPSFILLY) threads the bilayer. Residues 102–247 (LCDEVISPAM…KEFLTWLNEQ (146 aa)) are Mitochondrial intermembrane-facing. 6 residues coordinate Cu cation: His-182, Cys-217, Glu-219, Cys-221, His-225, and Met-228. Glu-219 is a binding site for Mg(2+).

The protein belongs to the cytochrome c oxidase subunit 2 family. As to quaternary structure, component of the cytochrome c oxidase (complex IV, CIV), a multisubunit enzyme composed of a catalytic core of 3 subunits and several supernumerary subunits. The complex exists as a monomer or a dimer and forms supercomplexes (SCs) in the inner mitochondrial membrane with ubiquinol-cytochrome c oxidoreductase (cytochrome b-c1 complex, complex III, CIII). Cu cation serves as cofactor. The signal sequence of COX2 is processed by IMP1.

It localises to the mitochondrion inner membrane. It catalyses the reaction 4 Fe(II)-[cytochrome c] + O2 + 8 H(+)(in) = 4 Fe(III)-[cytochrome c] + 2 H2O + 4 H(+)(out). Functionally, component of the cytochrome c oxidase, the last enzyme in the mitochondrial electron transport chain which drives oxidative phosphorylation. The respiratory chain contains 3 multisubunit complexes succinate dehydrogenase (complex II, CII), ubiquinol-cytochrome c oxidoreductase (cytochrome b-c1 complex, complex III, CIII) and cytochrome c oxidase (complex IV, CIV), that cooperate to transfer electrons derived from NADH and succinate to molecular oxygen, creating an electrochemical gradient over the inner membrane that drives transmembrane transport and the ATP synthase. Cytochrome c oxidase is the component of the respiratory chain that catalyzes the reduction of oxygen to water. Electrons originating from reduced cytochrome c in the intermembrane space (IMS) are transferred via the dinuclear copper A center (CU(A)) of subunit 2 and heme A of subunit 1 to the active site in subunit 1, a binuclear center (BNC) formed by heme A3 and copper B (CU(B)). The BNC reduces molecular oxygen to 2 water molecules using 4 electrons from cytochrome c in the IMS and 4 protons from the mitochondrial matrix. The sequence is that of Cytochrome c oxidase subunit 2 (COX2) from Wickerhamomyces canadensis (Yeast).